The following is a 223-amino-acid chain: Chalcone--flavanone isomerase (223 aa).

Positions 50, 114, and 191 each coordinate substrate.

The protein belongs to the chalcone isomerase family.

It carries out the reaction a chalcone = a flavanone.. The protein operates within secondary metabolite biosynthesis; flavonoid biosynthesis. Its function is as follows. Catalyzes the intramolecular cyclization of bicyclic chalcones into tricyclic (S)-flavanones. Responsible for the isomerization of 4,2',4',6'-tetrahydroxychalcone (also termed chalcone) into naringenin. The polypeptide is Chalcone--flavanone isomerase (CHI) (Pisum sativum (Garden pea)).